The chain runs to 566 residues: Beta,beta-carotene 15,15'-dioxygenase (566 aa).

Positions 172, 237, 308, and 514 each coordinate Fe cation. A disordered region spans residues 530 to 566; it reads PAETQEVENSDHPTDPTAPELSHSENDFTAGHGGSSL.

This sequence belongs to the carotenoid oxygenase family. The cofactor is Fe(2+). Expressed in liver, kidney, small intestine and testis.

It localises to the cytoplasm. Its subcellular location is the cytosol. It catalyses the reaction all-trans-beta-carotene + O2 = 2 all-trans-retinal. The protein operates within cofactor metabolism; retinol metabolism. In terms of biological role, symmetrically cleaves beta-carotene into two molecules of retinal using a dioxygenase mechanism. The chain is Beta,beta-carotene 15,15'-dioxygenase from Mus musculus (Mouse).